A 385-amino-acid chain; its full sequence is MVSSATILRMVAPCWRRPSVKGDHSTRDANGRCDGLLWYKDSGNHVAGEFSMSVIQANNLLEDHSKLESGPVSMFDSGPQATFVGVYDGHGGPEAARFVNKHLFDNIRKFTSENHGMSANVITKAFLATEEDFLSLVRRQWQIKPQIASVGACCLVGIICSGLLYIANAGDSRVVLGRLEKAFKIVKAVQLSSEHNASLESVREELRSLHPNDPQIVVLKHKVWRVKGIIQVSRSIGDAYLKKAEFNREPLLAKFRVPEVFHKPILRAEPAITVHKIHPEDQFLIFASDGLWEHLSNQEAVDIVNTCPRNGIARKLIKTALREAAKKREMRYSDLKKIDRGVRRHFHDDITVIVVFLDSHLVSRSTSRRPLLSISGGGDLAGPST.

The PPM-type phosphatase domain occupies 46 to 357 (VAGEFSMSVI…DDITVIVVFL (312 aa)). The residue at position 77 (serine 77) is a Phosphoserine. Mn(2+)-binding residues include aspartate 88, glycine 89, aspartate 289, and aspartate 348.

The protein belongs to the PP2C family. As to quaternary structure, interacts with BIK1. The cofactor is Mg(2+). Mn(2+) is required as a cofactor. In terms of processing, phosphorylation at Ser-77 induces dissociation of PP2C38 from BIK1.

It localises to the cell membrane. It catalyses the reaction O-phospho-L-seryl-[protein] + H2O = L-seryl-[protein] + phosphate. The enzyme catalyses O-phospho-L-threonyl-[protein] + H2O = L-threonyl-[protein] + phosphate. Functionally, may dephosphorylate and repress plasma membrane H(+)-ATPases (PM H(+)-ATPases, e.g. AHA1 and AHA2), thus influencing negatively plant growth and fitness. Involved in pathogen-associated molecular pattern (PAMP)-triggered immunity (PTI) signaling. Negatively regulates immune responses by controlling the phosphorylation and activation status of BIK1, a central rate-limiting kinase in PTI signaling. Impairs the phosphorylation of the NADPH oxidase RBOHD by BIK1. The sequence is that of Probable protein phosphatase 2C 38 from Arabidopsis thaliana (Mouse-ear cress).